The chain runs to 274 residues: Orotidine 5'-phosphate decarboxylase (274 aa).

Lys95 functions as the Proton donor in the catalytic mechanism.

Belongs to the OMP decarboxylase family. Type 2 subfamily.

The enzyme catalyses orotidine 5'-phosphate + H(+) = UMP + CO2. The protein operates within pyrimidine metabolism; UMP biosynthesis via de novo pathway; UMP from orotate: step 2/2. The chain is Orotidine 5'-phosphate decarboxylase from Verminephrobacter eiseniae (strain EF01-2).